The sequence spans 104 residues: Thioredoxin-3 (104 aa).

One can recognise a Thioredoxin domain in the interval 2–104; that stretch reads SKVIHVTSNE…TLRSTLEANI (103 aa). Residues Cys31 and Cys34 each act as nucleophile in the active site. Cys31 and Cys34 are oxidised to a cystine.

It belongs to the thioredoxin family.

Functionally, participates in various redox reactions through the reversible oxidation of its active center dithiol to a disulfide and catalyzes dithiol-disulfide exchange reactions. The polypeptide is Thioredoxin-3 (trxC) (Dictyostelium discoideum (Social amoeba)).